Here is a 199-residue protein sequence, read N- to C-terminus: Adenylyl-sulfate kinase (199 aa).

35–42 lines the ATP pocket; that stretch reads GLSGSGKS. Ser109 acts as the Phosphoserine intermediate in catalysis.

This sequence belongs to the APS kinase family.

It catalyses the reaction adenosine 5'-phosphosulfate + ATP = 3'-phosphoadenylyl sulfate + ADP + H(+). The protein operates within sulfur metabolism; hydrogen sulfide biosynthesis; sulfite from sulfate: step 2/3. In terms of biological role, catalyzes the synthesis of activated sulfate. The protein is Adenylyl-sulfate kinase of Clostridium kluyveri (strain ATCC 8527 / DSM 555 / NBRC 12016 / NCIMB 10680 / K1).